The following is a 249-amino-acid chain: 5'-nucleotidase SurE (249 aa).

The a divalent metal cation site is built by aspartate 8, aspartate 9, serine 39, and asparagine 91.

The protein belongs to the SurE nucleotidase family. Requires a divalent metal cation as cofactor.

The protein resides in the cytoplasm. The enzyme catalyses a ribonucleoside 5'-phosphate + H2O = a ribonucleoside + phosphate. Its function is as follows. Nucleotidase that shows phosphatase activity on nucleoside 5'-monophosphates. The chain is 5'-nucleotidase SurE from Haemophilus influenzae (strain PittGG).